Here is a 535-residue protein sequence, read N- to C-terminus: Glucose-6-phosphate isomerase (535 aa).

Residue E347 is the Proton donor of the active site. Active-site residues include H378 and K493.

The protein belongs to the GPI family.

The protein localises to the cytoplasm. It catalyses the reaction alpha-D-glucose 6-phosphate = beta-D-fructose 6-phosphate. It functions in the pathway carbohydrate biosynthesis; gluconeogenesis. Its pathway is carbohydrate degradation; glycolysis; D-glyceraldehyde 3-phosphate and glycerone phosphate from D-glucose: step 2/4. Its function is as follows. Catalyzes the reversible isomerization of glucose-6-phosphate to fructose-6-phosphate. In Chlamydia felis (strain Fe/C-56) (Chlamydophila felis), this protein is Glucose-6-phosphate isomerase.